The chain runs to 240 residues: Uridylate kinase (240 aa).

Residue 13–16 (KFSG) coordinates ATP. Gly55 contacts UMP. Gly56 and Arg60 together coordinate ATP. UMP-binding positions include Asp76 and 137 to 144 (TGNPFFTT). 3 residues coordinate ATP: Thr164, Tyr170, and Asp173.

Belongs to the UMP kinase family. As to quaternary structure, homohexamer.

It localises to the cytoplasm. It catalyses the reaction UMP + ATP = UDP + ADP. The protein operates within pyrimidine metabolism; CTP biosynthesis via de novo pathway; UDP from UMP (UMPK route): step 1/1. Inhibited by UTP. Catalyzes the reversible phosphorylation of UMP to UDP. The protein is Uridylate kinase of Helicobacter pylori (strain HPAG1).